Here is a 203-residue protein sequence, read N- to C-terminus: MNNLKQGKFITFEGGEGIGKSTQSQMLYEYLQSQNTPVILTREVGGTIVAEKMREILVHEELLPMSELLQAMAARYDHMARKIIPALQEGHIVICDRFIDSTVCYQGLELENGIDLVYNLHKTLMPSLMPDITFFIDVEPDTAIKRVNSRNMNNKFDIRGIDFYKTIYYCFKELSNRFPERIKTIKASDLSPLEVHELIKKHL.

Residue 14-21 (GGEGIGKS) coordinates ATP.

This sequence belongs to the thymidylate kinase family.

It catalyses the reaction dTMP + ATP = dTDP + ADP. Functionally, phosphorylation of dTMP to form dTDP in both de novo and salvage pathways of dTTP synthesis. The sequence is that of Thymidylate kinase from Rickettsia peacockii (strain Rustic).